The primary structure comprises 338 residues: Decarboxylase macB (338 aa).

Zn(2+) contacts are provided by His-7, His-9, His-159, and Asp-283.

The protein belongs to the metallo-dependent hydrolases superfamily. ACMSD family.

It carries out the reaction 6-methylsalicylate + H(+) = 3-methylphenol + CO2. It participates in secondary metabolite biosynthesis; terpenoid biosynthesis. Functionally, decarboxylase; part of the gene cluster that mediates the biosynthesis of macrophorins, isoprenoid epoxycyclohexenones containing cyclized drimane moieties. The first step of the pathway is the synthesis of 6-methylsalicylic acid (6-MSA) by the polyketide synthase macA. 6-MSA is then converted to m-cresol by the decarboxylase macB. The cytochrome P450 monooxygenase macC then catalyzes the oxidation of m-cresol to toluquinol. Epoxidation of toluquinol is then performed by the short chain dehydrogenase macD, with the help of macE, and a further prenylation by macG leads to 7-deacetoxyyanuthone A. The next step is the hydroxylation of C-22 of 7-deacetoxyyanuthone A by the cytochrome P450 monooxygenase macH to yield 22-deacetylyanuthone A. O-Mevalon transferase macI then attaches mevalon to the hydroxyl group of 22-deacetylyanuthone A to produce yanuthone E. The terpene cyclase macJ catalyzes the cyclization of 22-deacetylyanuthone A to macrophorin A. MacJ is also able to catalyze cyclization of yanuthone E and 7-deacetoxyyanuthone A to their corresponding macrophorins. The macJ products can be further modified by macH and macJ, as well as by the FAD-dependent monooxygenase macF, to produce additional macrophorins, including 4'-oxomacrophorin A, 4'-oxomacrophorin D and 4'-oxomacrophorin E. The protein is Decarboxylase macB of Penicillium terrestre.